The chain runs to 157 residues: Monooxygenase CPUR_05417 (157 aa).

This sequence belongs to the avfA family.

It functions in the pathway secondary metabolite biosynthesis. Its function is as follows. Monooxygenase; part of the ergochrome gene cluster responsible for the typical purple-black color of the ergot sclerotia. The ergochrome gene cluster produces several ergot pigments including the yellow ergochrome secalonic acid and its derivatives, as well as the red anthraquinones endocrocin and clavorubin. The pathway begins with the synthesis of atrochrysone thioester by the polyketide synthase (PKS) CPUR_05437. The atrochrysone carboxyl ACP thioesterase CPUR_05436 then breaks the thioester bond and releases the atrochrysone carboxylic acid from CPUR_05437. The atrochrysone carboxylic acid is then converted to atrochrysone which is further transformed into emodin anthrone. The next step is performed by the anthrone oxygenase CPUR_05434 that catalyzes the oxidation of emodinanthrone to emodin. Emodin is further modified to yield monodictyphenone via several steps involving CPUR_05427, CPUR_05428, CPUR_05429 and CPUR_05430. The short chain dehydrogenase/reductase CPUR_05418 then catalyzes the C-5 ketoreduction to give the xanthone skeleton of the monomeric units. Ergochromes formation requires further dimerization steps of different xanthone units, probably catalyzed by the cytochrome P450 monooxygenase CPUR_05419. CPUR_05425, CPUR_05426 and CPUR_05431 are unique to Claviceps, thus it is likely that they are involved in further modification of xanthone units or in their dimerization. The yellow ergochromes and the red anthraquinone pigments endocrocin and clavorubin are products from the same PKS derived precursors and the latter are likely shunt products in the pathway of xanthone biosynthesis. It is proposed that atrochrysone carboxylic acid released from the PKS CPUR_05437 can also be converted to endocrocin anthrone which is further oxidized into endocrocin by CPUR_05435. Endocrocin could be then modified to clavorubin, possibly by CPUR_05423 and CPUR_05431. Clavorubin is the principal anthraquinone metabolite produced by the cluster with a much higher yield compared to endocrocin. In Claviceps purpurea (strain 20.1) (Ergot fungus), this protein is Monooxygenase CPUR_05417.